Consider the following 166-residue polypeptide: NAD(P)H-quinone oxidoreductase subunit I, chloroplastic (166 aa).

2 4Fe-4S ferredoxin-type domains span residues 55–84 (GRIH…VDWK) and 95–124 (LNYS…MTEE). C64, C67, C70, C74, C104, C107, C110, and C114 together coordinate [4Fe-4S] cluster.

This sequence belongs to the complex I 23 kDa subunit family. In terms of assembly, NDH is composed of at least 16 different subunits, 5 of which are encoded in the nucleus. Requires [4Fe-4S] cluster as cofactor.

It localises to the plastid. The protein resides in the chloroplast thylakoid membrane. It catalyses the reaction a plastoquinone + NADH + (n+1) H(+)(in) = a plastoquinol + NAD(+) + n H(+)(out). It carries out the reaction a plastoquinone + NADPH + (n+1) H(+)(in) = a plastoquinol + NADP(+) + n H(+)(out). NDH shuttles electrons from NAD(P)H:plastoquinone, via FMN and iron-sulfur (Fe-S) centers, to quinones in the photosynthetic chain and possibly in a chloroplast respiratory chain. The immediate electron acceptor for the enzyme in this species is believed to be plastoquinone. Couples the redox reaction to proton translocation, and thus conserves the redox energy in a proton gradient. The polypeptide is NAD(P)H-quinone oxidoreductase subunit I, chloroplastic (Oteiza scandens (Climbing oteiza)).